The following is a 203-amino-acid chain: MARYTGPTTRVSRRFGQQILGSGKAFERRSYPPGQHGPKLRRKVSEYAVGLNEKQKLRYIYGLLERQFRRVFEIAKKERGVTGERFLQLLETRLDSVVYLLGLAKSRAAARQFVNHGHIRVNGHKVDIASYNVKAGDEIEVKNSPASRQLATRCLEENRIRNVPGWLSMNAETFKATVNRLPTRDEMEQGINEQLIVEFYSRF.

The 73-residue stretch at 92–164 (TRLDSVVYLL…LEENRIRNVP (73 aa)) folds into the S4 RNA-binding domain.

This sequence belongs to the universal ribosomal protein uS4 family. In terms of assembly, part of the 30S ribosomal subunit. Contacts protein S5. The interaction surface between S4 and S5 is involved in control of translational fidelity.

Its function is as follows. One of the primary rRNA binding proteins, it binds directly to 16S rRNA where it nucleates assembly of the body of the 30S subunit. Functionally, with S5 and S12 plays an important role in translational accuracy. In Opitutus terrae (strain DSM 11246 / JCM 15787 / PB90-1), this protein is Small ribosomal subunit protein uS4.